We begin with the raw amino-acid sequence, 291 residues long: Bifunctional protein FolD (291 aa).

NADP(+) is bound by residues 166–168 (GAG), I191, and I232.

The protein belongs to the tetrahydrofolate dehydrogenase/cyclohydrolase family. In terms of assembly, homodimer.

It carries out the reaction (6R)-5,10-methylene-5,6,7,8-tetrahydrofolate + NADP(+) = (6R)-5,10-methenyltetrahydrofolate + NADPH. The enzyme catalyses (6R)-5,10-methenyltetrahydrofolate + H2O = (6R)-10-formyltetrahydrofolate + H(+). The protein operates within one-carbon metabolism; tetrahydrofolate interconversion. In terms of biological role, catalyzes the oxidation of 5,10-methylenetetrahydrofolate to 5,10-methenyltetrahydrofolate and then the hydrolysis of 5,10-methenyltetrahydrofolate to 10-formyltetrahydrofolate. This is Bifunctional protein FolD from Aquifex aeolicus (strain VF5).